Reading from the N-terminus, the 189-residue chain is Peptidyl-tRNA hydrolase (189 aa).

Tyr-16 serves as a coordination point for tRNA. His-21 serves as the catalytic Proton acceptor. TRNA-binding residues include Phe-67, Asn-69, and Asn-115.

It belongs to the PTH family. Monomer.

The protein localises to the cytoplasm. The enzyme catalyses an N-acyl-L-alpha-aminoacyl-tRNA + H2O = an N-acyl-L-amino acid + a tRNA + H(+). Hydrolyzes ribosome-free peptidyl-tRNAs (with 1 or more amino acids incorporated), which drop off the ribosome during protein synthesis, or as a result of ribosome stalling. In terms of biological role, catalyzes the release of premature peptidyl moieties from peptidyl-tRNA molecules trapped in stalled 50S ribosomal subunits, and thus maintains levels of free tRNAs and 50S ribosomes. The protein is Peptidyl-tRNA hydrolase of Legionella pneumophila (strain Corby).